We begin with the raw amino-acid sequence, 180 residues long: uncharacterized protein (180 aa).

Coiled coils occupy residues 3 to 82 and 95 to 179; these read LKSL…QKIA and REYE…EKYG.

This is an uncharacterized protein from Aquifex aeolicus (strain VF5).